The following is a 379-amino-acid chain: Wnt inhibitory factor 1 (379 aa).

Residues 1–28 (MARRSAFPAAALWLWSILLCLLALRAEA) form the signal peptide. Positions 38–177 (LWIDAHQARV…PQNAIFFKTC (140 aa)) constitute a WIF domain. A glycan (N-linked (GlcNAc...) asparagine) is linked at N88. 7 disulfides stabilise this stretch: C140-C177, C182-C192, C186-C198, C200-C209, C214-C224, C218-C230, and C232-C241. 5 consecutive EGF-like domains span residues 178-210 (QQAECPGGCRNGGFCNERRICECPDGFHGPHCE), 211-242 (KALCTPRCMNGGLCVTPGFCICPPGFYGVNCD), 243-271 (KANCSTTCFNGGTCFYPGKCICPPGLEGE), 274-306 (EISKCPQPCRNGGKCIGKSKCKCSKGYQGDLCS), and 307-338 (KPVCEPGCGAHGTCHEPNKCQCQEGWHGRHCN). N245 is a glycosylation site (N-linked (GlcNAc...) asparagine). 8 disulfide bridges follow: C246-C256, C250-C262, C278-C288, C282-C294, C296-C305, C310-C320, C314-C326, and C328-C337. Positions 354-379 (AQLRQHTPSLKKAEERRDPPESNYIW) are disordered. Residues 364–373 (KKAEERRDPP) show a composition bias toward basic and acidic residues.

As to quaternary structure, interacts with MYOC.

Its subcellular location is the secreted. Binds to WNT proteins and inhibits their activities. May be involved in mesoderm segmentation. The polypeptide is Wnt inhibitory factor 1 (WIF1) (Homo sapiens (Human)).